Here is a 530-residue protein sequence, read N- to C-terminus: Estrogen receptor beta (530 aa).

The modulating stretch occupies residues 1 to 148; it reads MDIKNSPSSL…GPSSKRDAHF (148 aa). At S61 the chain carries Phosphoserine; alternate. A glycan (O-linked (GlcNAc) serine; alternate) is linked at S61. 2 positions are modified to phosphoserine; by MAPK: S87 and S105. 2 consecutive NR C4-type zinc fingers follow at residues 149-169 and 185-209; these read CAVC…CEGC and CPAT…LRKC. Positions 149–214 form a DNA-binding region, nuclear receptor; sequence CAVCSDYASG…RLRKCYEVGM (66 aa). The NR LBD domain occupies 264–498; the sequence is SPEQLVLTLL…DLLLEMMNAH (235 aa). The disordered stretch occupies residues 507-530; the sequence is ITGSECSPAEDSKSTEGSQNPQSP. Residues 521–530 are compositionally biased toward polar residues; that stretch reads TEGSQNPQSP.

The protein belongs to the nuclear hormone receptor family. NR3 subfamily. Binds DNA as a homodimer. Can form a heterodimer with ESR1. Interacts with NCOA1, NCOA3, NCOA5 and NCOA6 coactivators, leading to a strong increase of transcription of target genes. Interacts with UBE1C and AKAP13. Interacts with DNTTIP2. Interacts with CCDC62 in the presence of estradiol/E2; this interaction seems to enhance the transcription of target genes. Interacts with DNAAF4. Interacts with PRMT2. Interacts with CCAR2 (via N-terminus) in a ligand-independent manner. Interacts with RBM39, in the presence of estradiol (E2). Interacts with STUB1/CHIP. Post-translationally, phosphorylation at Ser-87 and Ser-105 recruits NCOA1.

Its subcellular location is the nucleus. In terms of biological role, nuclear hormone receptor. Binds estrogens with an affinity similar to that of ESR1/ER-alpha, and activates expression of reporter genes containing estrogen response elements (ERE) in an estrogen-dependent manner. The polypeptide is Estrogen receptor beta (ESR2) (Callithrix jacchus (White-tufted-ear marmoset)).